The following is a 533-amino-acid chain: MAPPSHCHTINGGAPRNGAIPEVETTTSTPAASDTALLLDADEFRRLGHQVVDFIADYYAGLGDYPVHPSVTPGFLRRQLPADAPSRPEPEAFAAALRDVRDLILPGVTHWQSPRHFAHFPASSSTVGALGEALAAGINVVPFTWAASPAATELEMVVVDWLGRALHLPESLLFAGGGGGTILGTSCEAVLCALVAARDRKLAEIGARRIGDLVVYCSDQTHFAFRKAARIAGIPREHCREIPTCRDDVFALSPTALHAAMQADVDAGLVPLFLCATVGTTQTTAVDPVRELCAVAARHGGVWVHVDAAYAGSALVCPEFRDVIAGAEAVDSLSMNAHKWLLANNDCCAVWVAAPSALVAALGTEQEYILRDAAAEGHDVVDYKDWGTTLTRRFRALKVWLVLRCYGVEGLRSHVRSHVAMAAAFEAMVRGDARFEVVAPRRFALVCFRLRSPPERLGVGVGVGGEKAANELNRRLLEEVNAASSGPYMSSAMVGGVYMLRCAIGSTLTEERHVREAWKVVQERATSILRKRG.

Residues 1–22 (MAPPSHCHTINGGAPRNGAIPE) are disordered. Residues T281 and N336 each coordinate pyridoxal 5'-phosphate. K339 carries the N6-(pyridoxal phosphate)lysine modification.

It belongs to the group II decarboxylase family. It depends on pyridoxal 5'-phosphate as a cofactor.

The enzyme catalyses L-tyrosine + H(+) = tyramine + CO2. In terms of biological role, catalyzes the decarboxylation of L-tyrosine to tyramine, which can be converted to the hydroxycinnamic acid amides feruloyltyramine and 4-coumaroyltyramine. Possesses low tryptophan decarboxylase activity. The polypeptide is Tyrosine decarboxylase (Oryza sativa subsp. japonica (Rice)).